A 266-amino-acid polypeptide reads, in one-letter code: Beta-lactamase OXA-10 (266 aa).

An N-terminal signal peptide occupies residues 1–19 (MKTFAAYVIIACLSSTALA). A disulfide bridge connects residues cysteine 44 and cysteine 51. The active-site Acyl-ester intermediate is the serine 67. The residue at position 70 (lysine 70) is an N6-carboxylysine. 4 residues coordinate a beta-lactam: serine 115, threonine 206, phenylalanine 208, and arginine 250.

The protein belongs to the class-D beta-lactamase family. As to quaternary structure, dimer.

The protein resides in the periplasm. The enzyme catalyses a beta-lactam + H2O = a substituted beta-amino acid. Activated, with respect to most beta-lactam substrates, in the presence of 0.05 M sodium bicarbonate. Its function is as follows. Class D beta-lactamase which confers resistance to the beta-lactam antibiotics, including penicillin, carbenicillin and oxacillin, and also some cephalosporins. Confers weak resistance to some carbapenems, in E.coli strain C600Z1. Acts via hydrolysis of the beta-lactam ring. Has penicillin- and cephalosporin-hydrolyzing activities. The chain is Beta-lactamase OXA-10 from Pseudomonas aeruginosa.